We begin with the raw amino-acid sequence, 76 residues long: Conotoxin Ca11b (76 aa).

An N-terminal signal peptide occupies residues 1–19 (MKLVLAIVVILMLLSLSTG). Residues 20–42 (AEMSDNHASMSANALRDRLLGPK) constitute a propeptide that is removed on maturation. 4 disulfide bridges follow: Cys-46–Cys-60, Cys-53–Cys-65, Cys-59–Cys-69, and Cys-64–Cys-76.

In terms of tissue distribution, expressed by the venom duct.

The protein resides in the secreted. The polypeptide is Conotoxin Ca11b (Conus caracteristicus (Characteristic cone)).